A 261-amino-acid polypeptide reads, in one-letter code: tRNA pseudouridine synthase A (261 aa).

Asp51 functions as the Nucleophile in the catalytic mechanism. Tyr109 serves as a coordination point for substrate.

Belongs to the tRNA pseudouridine synthase TruA family. In terms of assembly, homodimer.

It carries out the reaction uridine(38/39/40) in tRNA = pseudouridine(38/39/40) in tRNA. Its function is as follows. Formation of pseudouridine at positions 38, 39 and 40 in the anticodon stem and loop of transfer RNAs. In Psychromonas ingrahamii (strain DSM 17664 / CCUG 51855 / 37), this protein is tRNA pseudouridine synthase A.